The sequence spans 87 residues: Large ribosomal subunit protein eL20 (87 aa).

It belongs to the eukaryotic ribosomal protein eL20 family. As to quaternary structure, part of the 50S ribosomal subunit. Binds 23S rRNA.

The sequence is that of Large ribosomal subunit protein eL20 from Hyperthermus butylicus (strain DSM 5456 / JCM 9403 / PLM1-5).